A 334-amino-acid polypeptide reads, in one-letter code: Leukocyte cell-derived chemotaxin 1 (334 aa).

The chain crosses the membrane as a helical span at residues 45–65 (VVLISGAVLLLFGAIGAFYFW). Positions 104–201 (GSGAEEAIAV…LCGDLPIFWL (98 aa)) constitute a BRICHOS domain. Cysteines 131 and 193 form a disulfide. The propeptide occupies 211 to 214 (RERR). The disordered stretch occupies residues 218–268 (RKIVPTTTKRPHSGPRSNPGAGRLNNETRPSVQEDSQAFNPDNPYHQQEGE). Positions 242 to 257 (NNETRPSVQEDSQAFN) are enriched in polar residues. N-linked (GlcNAc...) asparagine glycosylation occurs at Asn-243. 4 disulfide bridges follow: Cys-282–Cys-286, Cys-283–Cys-323, Cys-293–Cys-317, and Cys-297–Cys-313.

This sequence belongs to the chondromodulin-1 family. Post-translationally, after cleavage, the post-translationally modified ChM-I is secreted as a glycoprotein. Detected in cartilage and cardiac valves (at protein level). Detected in the laminae fibrosa, spongiosa and ventricularis layers of normal cardiac valves (at protein level). Expression is decreased cardiac valves of patients with valvular heart disease (at protein level). Weakly expressed in chondrosarcoma.

It localises to the secreted. The protein localises to the extracellular space. Its subcellular location is the extracellular matrix. The protein resides in the endomembrane system. Bifunctional growth regulator that stimulates the growth of cultured chondrocytes in the presence of basic fibroblast growth factor (FGF) but inhibits the growth of cultured vascular endothelial cells. May contribute to the rapid growth of cartilage and vascular invasion prior to the replacement of cartilage by bone during endochondral bone development. Inhibits in vitro tube formation and mobilization of endothelial cells. Plays a role as antiangiogenic factor in cardiac valves to suppress neovascularization. In Homo sapiens (Human), this protein is Leukocyte cell-derived chemotaxin 1.